A 237-amino-acid chain; its full sequence is 4-hydroxy-tetrahydrodipicolinate reductase (237 aa).

Residues 11–16 (GASGRM), 92–94 (GTT), and 116–119 (GSNF) each bind NAD(+). His148 serves as the catalytic Proton donor/acceptor. His149 contributes to the (S)-2,3,4,5-tetrahydrodipicolinate binding site. The Proton donor role is filled by Lys152. 158–159 (GS) serves as a coordination point for (S)-2,3,4,5-tetrahydrodipicolinate.

Belongs to the DapB family.

The protein resides in the cytoplasm. The catalysed reaction is (S)-2,3,4,5-tetrahydrodipicolinate + NAD(+) + H2O = (2S,4S)-4-hydroxy-2,3,4,5-tetrahydrodipicolinate + NADH + H(+). It carries out the reaction (S)-2,3,4,5-tetrahydrodipicolinate + NADP(+) + H2O = (2S,4S)-4-hydroxy-2,3,4,5-tetrahydrodipicolinate + NADPH + H(+). It functions in the pathway amino-acid biosynthesis; L-lysine biosynthesis via DAP pathway; (S)-tetrahydrodipicolinate from L-aspartate: step 4/4. In terms of biological role, catalyzes the conversion of 4-hydroxy-tetrahydrodipicolinate (HTPA) to tetrahydrodipicolinate. This Xylella fastidiosa (strain 9a5c) protein is 4-hydroxy-tetrahydrodipicolinate reductase.